Here is a 500-residue protein sequence, read N- to C-terminus: Probable cation transporter HKT1;4 (500 aa).

Topologically, residues 1–12 are cytoplasmic; it reads MPTSRRALAGGA. 2 helical membrane passes run 13–33 and 74–94; these read LSMH…LLGV and LVVL…LVGL. At 95–156 the chain is on the cytoplasmic side; that stretch reads ASKWSKLRSD…ADTLRHNAVR (62 aa). The interval 121–145 is disordered; the sequence is ADIDGGDVENPTSSGEEAASRRRPM. The next 2 helical transmembrane spans lie at 157 to 177 and 239 to 259; these read ALFY…AVAV and VLAG…AAAA. At 260–290 the chain is on the cytoplasmic side; sequence ATRREELVEMAREGGRAAAAGYAHLMPARRC. Helical transmembrane passes span 291–311 and 346–366; these read WMLA…VCGM and LSIL…LPPY. Topologically, residues 367-390 are cytoplasmic; sequence TTWFPFEENSTTKDSNAENQGIRL. Helical transmembrane passes span 391-411 and 464-484; these read LEST…AICI and GFVG…MFFG. Residues 485-500 are Cytoplasmic-facing; it reads RLKKFSMKGGKAWKLS.

It belongs to the TrkH potassium transport family. HKT (TC 2.A.38.3) subfamily.

The protein localises to the membrane. Functionally, probable cation transporter. May be involved in regulation of potassium-sodium homeostasis. In Oryza sativa subsp. japonica (Rice), this protein is Probable cation transporter HKT1;4.